The sequence spans 828 residues: Periplasmic nitrate reductase (828 aa).

Residues 1–31 constitute a signal peptide (tat-type signal); the sequence is MKLSRRSFMKANAVAAAAAAAGLSVPGVARA. The 4Fe-4S Mo/W bis-MGD-type domain occupies 39–95; it reads IKWDKAPCRFCGTGCGVLVGTQQGRVVACQGDPDAPVNRGLNCIKGYFLPKIMYGKD. [4Fe-4S] cluster contacts are provided by cysteine 46, cysteine 49, cysteine 53, and cysteine 81. Residues lysine 83, glutamine 150, asparagine 175, cysteine 179, 212 to 219, 243 to 247, 262 to 264, methionine 372, glutamine 376, asparagine 482, 508 to 509, lysine 531, aspartate 558, and 718 to 727 contribute to the Mo-bis(molybdopterin guanine dinucleotide) site; these read WGANMAEM, STYQH, QSD, SD, and TGRVLEHWHT. A substrate-binding site is contributed by phenylalanine 794. The Mo-bis(molybdopterin guanine dinucleotide) site is built by asparagine 802 and lysine 819.

This sequence belongs to the prokaryotic molybdopterin-containing oxidoreductase family. NasA/NapA/NarB subfamily. In terms of assembly, component of the periplasmic nitrate reductase NapAB complex composed of NapA and NapB. The cofactor is [4Fe-4S] cluster. Requires Mo-bis(molybdopterin guanine dinucleotide) as cofactor. Predicted to be exported by the Tat system. The position of the signal peptide cleavage has not been experimentally proven.

It is found in the periplasm. It catalyses the reaction 2 Fe(II)-[cytochrome] + nitrate + 2 H(+) = 2 Fe(III)-[cytochrome] + nitrite + H2O. Its function is as follows. Catalytic subunit of the periplasmic nitrate reductase complex NapAB. Receives electrons from NapB and catalyzes the reduction of nitrate to nitrite. The chain is Periplasmic nitrate reductase from Escherichia coli O8 (strain IAI1).